A 353-amino-acid polypeptide reads, in one-letter code: MKEEIPVLKGKTKKELEEICVSLGLEKYRAAQIYTGIYKSRYTTIDQFTTLSKEVREKLKEHTQYPEIEIGRDLVSKEDGTRKFTFYVGENKEIEAVWIPSGDGGRKTICISSQIGCTLNCKFCATGLLEYKGNLQTWQILDQVLQVERLVGDRATNIVFMGMGEPMHNYFSVMKAAHILRDKDAFGLGALRITISTAGVTTGINRFIENKEPFNFAISLNHPNPNARSSVMDVNDKHPLEKLIDSAKRFTKELDRAITFEYVMIPDVNMGRDNAERLAKIARSVNKCKINVIPLNTDFTGWRRPTDDEVKDFVMHLKAKTTAPILNRRSPGRDINGACGMLALKGIRSETTK.

The active-site Proton acceptor is E95. The Radical SAM core domain occupies 103–333 (DGGRKTICIS…PILNRRSPGR (231 aa)). Cysteines 110 and 339 form a disulfide. C117, C121, and C124 together coordinate [4Fe-4S] cluster. Residues 164–165 (GE), S196, 219–221 (SLN), and N296 each bind S-adenosyl-L-methionine. C339 serves as the catalytic S-methylcysteine intermediate.

It belongs to the radical SAM superfamily. RlmN family. It depends on [4Fe-4S] cluster as a cofactor.

The protein localises to the cytoplasm. The enzyme catalyses adenosine(2503) in 23S rRNA + 2 reduced [2Fe-2S]-[ferredoxin] + 2 S-adenosyl-L-methionine = 2-methyladenosine(2503) in 23S rRNA + 5'-deoxyadenosine + L-methionine + 2 oxidized [2Fe-2S]-[ferredoxin] + S-adenosyl-L-homocysteine. The catalysed reaction is adenosine(37) in tRNA + 2 reduced [2Fe-2S]-[ferredoxin] + 2 S-adenosyl-L-methionine = 2-methyladenosine(37) in tRNA + 5'-deoxyadenosine + L-methionine + 2 oxidized [2Fe-2S]-[ferredoxin] + S-adenosyl-L-homocysteine. Its function is as follows. Specifically methylates position 2 of adenine 2503 in 23S rRNA and position 2 of adenine 37 in tRNAs. In Leptospira biflexa serovar Patoc (strain Patoc 1 / Ames), this protein is Probable dual-specificity RNA methyltransferase RlmN.